The following is a 633-amino-acid chain: Terminal nucleotidyltransferase 4B (633 aa).

Residues 1–115 form a disordered region; the sequence is MFRSGERPLG…GGGRADGGGG (115 aa). A compositionally biased stretch (polar residues) spans 25 to 34; the sequence is ETTNNNNNHH. Low complexity-rich tracts occupy residues 36–52 and 60–70; these read PAAW…ASPV and RPAAALPASES. The segment covering 87–98 has biased composition (polar residues); it reads ASTYGLNYSLLQ. The span at 103–115 shows a compositional bias: gly residues; it reads RAAGGGRADGGGG. Residues D191 and D193 each coordinate Mg(2+). Residues G254, K279, S297, Y298, N382, and R386 each contribute to the ATP site. The region spanning 322–382 is the PAP-associated domain; sequence NYGVLLIEFF…YIEDPLQPGN (61 aa). The disordered stretch occupies residues 484–633; that stretch reads LGKCRSNASE…RDAPLSELCR (150 aa). Positions 492–519 are enriched in low complexity; sequence SEPLSKHSSNSSSGPVSSSSATQSSSSD. A Glycyl lysine isopeptide (Lys-Gly) (interchain with G-Cter in SUMO2) cross-link involves residue K531. Residues 542-552 are compositionally biased toward polar residues; sequence RVGSQDVSLEV. S545 carries the post-translational modification Phosphoserine. Glycyl lysine isopeptide (Lys-Gly) (interchain with G-Cter in SUMO2) cross-links involve residues K558, K573, and K587. Over residues 559-614 the composition is skewed to polar residues; that stretch reads MQSTQTTNTPNNANKSQHGSARLFRSSSKGFQGTAQTSHGALMTSKQHQGKSNTQY. The Basic, involved in binding of the RNA primer signature appears at 618–624; that stretch reads KKRRHKR.

The protein belongs to the DNA polymerase type-B-like family. As to quaternary structure, component of a nucleolar TRAMP-like complex, an ATP-dependent exosome regulatory complex consisting of a helicase (MTREX), an oligadenylate polymerase (TENT4B or TENT4A), and a substrate specific RNA-binding factor (ZCCHC7 or ZCCHC8). Several TRAMP-like complexes exist with specific compositions and are associated with nuclear, or nucleolar RNA exosomes. It depends on Mg(2+) as a cofactor. Requires Mn(2+) as cofactor.

The protein resides in the nucleus. It is found in the nucleolus. The protein localises to the cytoplasm. It catalyses the reaction RNA(n) + ATP = RNA(n)-3'-adenine ribonucleotide + diphosphate. In terms of biological role, terminal nucleotidyltransferase that catalyzes preferentially the transfer of ATP and GTP on RNA 3' poly(A) tail creating a heterogeneous 3' poly(A) tail leading to mRNAs stabilization by protecting mRNAs from active deadenylation. Also functions as a catalytic subunit of a TRAMP-like complex which has a poly(A) RNA polymerase activity and is involved in a post-transcriptional quality control mechanism. Polyadenylation with short oligo(A) tails is required for the degradative activity of the exosome on several of its nuclear RNA substrates. Doesn't need a cofactor for polyadenylation activity (in vitro). Plays a role in replication-dependent histone mRNA degradation, probably through terminal uridylation of mature histone mRNAs. May play a role in sister chromatid cohesion. In Mus musculus (Mouse), this protein is Terminal nucleotidyltransferase 4B.